The sequence spans 237 residues: Ribosomal RNA small subunit methyltransferase G (237 aa).

S-adenosyl-L-methionine is bound by residues Gly78, Phe83, 129–130, and Arg148; that span reads AE.

Belongs to the methyltransferase superfamily. RNA methyltransferase RsmG family.

Its subcellular location is the cytoplasm. Specifically methylates the N7 position of a guanine in 16S rRNA. The polypeptide is Ribosomal RNA small subunit methyltransferase G (Streptococcus pyogenes serotype M3 (strain ATCC BAA-595 / MGAS315)).